The following is a 583-amino-acid chain: Leucine aminopeptidase 2, chloroplastic (583 aa).

A chloroplast-targeting transit peptide spans 1–70 (MAVTLVTSFA…ISHATLGLTQ (70 aa)). Mn(2+)-binding residues include Lys-351 and Asp-356. Lys-363 is an active-site residue. Residues Asp-376, Asp-436, and Glu-438 each coordinate Mn(2+). Arg-440 is an active-site residue.

Belongs to the peptidase M17 family. Homohexamer (dimer of homotrimers). It depends on Mn(2+) as a cofactor.

It is found in the plastid. It localises to the chloroplast. The enzyme catalyses Release of an N-terminal amino acid, Xaa-|-Yaa-, in which Xaa is preferably Leu, but may be other amino acids including Pro although not Arg or Lys, and Yaa may be Pro. Amino acid amides and methyl esters are also readily hydrolyzed, but rates on arylamides are exceedingly low.. It carries out the reaction Release of N-terminal proline from a peptide.. Functionally, presumably involved in the processing and regular turnover of intracellular proteins. Catalyzes the removal of unsubstituted N-terminal amino acids from various peptides. Possesses leucine aminopeptidase activity against the model substrate leucine-amido methyl coumarin. Does not seem to possess Cys-Gly dipeptidase activity. Its function is as follows. Functions as a molecular chaperone to protect proteins from heat-induced damage. The chain is Leucine aminopeptidase 2, chloroplastic from Arabidopsis thaliana (Mouse-ear cress).